The primary structure comprises 97 residues: Large ribosomal subunit protein bL31 (97 aa).

The interval 76 to 97 is disordered; the sequence is KTPKKAKGKTEEYTKHRSLNEL. Residues 83-97 show a composition bias toward basic and acidic residues; that stretch reads GKTEEYTKHRSLNEL.

This sequence belongs to the bacterial ribosomal protein bL31 family. Type A subfamily. In terms of assembly, part of the 50S ribosomal subunit.

In terms of biological role, binds the 23S rRNA. This is Large ribosomal subunit protein bL31 from Mycoplasma pneumoniae (strain ATCC 29342 / M129 / Subtype 1) (Mycoplasmoides pneumoniae).